Consider the following 81-residue polypeptide: UPF0410 protein YwzA (81 aa).

A run of 3 helical transmembrane segments spans residues 1–21 (MSFL…SLFV), 27–47 (GGII…HGLL), and 56–76 (GFAI…VSLL).

Belongs to the UPF0410 family.

It is found in the cell membrane. The protein is UPF0410 protein YwzA (ywzA) of Bacillus subtilis (strain 168).